A 102-amino-acid polypeptide reads, in one-letter code: RNA-binding protein Hfq (102 aa).

The Sm domain occupies Asp-9–Val-68. The tract at residues Val-63–Glu-102 is disordered. The segment covering His-70–Gly-86 has biased composition (low complexity).

This sequence belongs to the Hfq family. As to quaternary structure, homohexamer.

In terms of biological role, RNA chaperone that binds small regulatory RNA (sRNAs) and mRNAs to facilitate mRNA translational regulation in response to envelope stress, environmental stress and changes in metabolite concentrations. Also binds with high specificity to tRNAs. The polypeptide is RNA-binding protein Hfq (Klebsiella pneumoniae (strain 342)).